A 254-amino-acid chain; its full sequence is Hydroxyacylglutathione hydrolase (254 aa).

Zn(2+) contacts are provided by His54, His56, Asp58, His59, His111, Asp130, and His168.

The protein belongs to the metallo-beta-lactamase superfamily. Glyoxalase II family. In terms of assembly, monomer. The cofactor is Zn(2+).

It carries out the reaction an S-(2-hydroxyacyl)glutathione + H2O = a 2-hydroxy carboxylate + glutathione + H(+). It participates in secondary metabolite metabolism; methylglyoxal degradation; (R)-lactate from methylglyoxal: step 2/2. Thiolesterase that catalyzes the hydrolysis of S-D-lactoyl-glutathione to form glutathione and D-lactic acid. In Legionella pneumophila (strain Corby), this protein is Hydroxyacylglutathione hydrolase.